The sequence spans 380 residues: MSNTAGQVIKCRAAVAWEAGKPLVIEEVEVAPPQAGEVRLKILFTSLCHTDVYFWEAKGQTPLFPRIFGHEAGGIVESVGEGVTHLKPGDHALPVFTGECGECPHCKSEESNMCNLLRINTDRGVMINDNKSRFSIKGQPVHHFVGTSTFSEYTVVHAGCVAKINPDAPLDKVCILSCGICTGLGATVNVAKPKPGSSVAIFGLGAVGLAAAEGARMSGASRIIGVDLVSSRFELAKKFGVNEFVNPKDHDKPVQQVIAEMTDGGVDRAVECTGSIQAMISAFECVHDGWGVAVLVGVPKKDDAFKTHPMNFLNERTLKGTFYGNYKPRTDLPNVVEQYMKGELELEKFITHSIPFSEINKAFDYMLKGESIRCIIRMEE.

Residues cysteine 48, threonine 50, histidine 70, cysteine 100, cysteine 103, cysteine 106, cysteine 114, and cysteine 178 each contribute to the Zn(2+) site. An alcohol contacts are provided by threonine 50 and histidine 70. Threonine 50 is an NAD(+) binding site. NAD(+) contacts are provided by residues 203 to 208 (GLGAVG), aspartate 227, arginine 232, threonine 273, valine 296, 296 to 298 (VGV), and arginine 373.

The protein belongs to the zinc-containing alcohol dehydrogenase family. As to quaternary structure, homodimer. Requires Zn(2+) as cofactor.

It localises to the cytoplasm. It carries out the reaction a primary alcohol + NAD(+) = an aldehyde + NADH + H(+). The enzyme catalyses a secondary alcohol + NAD(+) = a ketone + NADH + H(+). The sequence is that of Alcohol dehydrogenase 1 (ADH1) from Trifolium repens (Creeping white clover).